The primary structure comprises 230 residues: Antiholin-like protein LrgB (230 aa).

The next 8 helical transmembrane spans lie at 5-25 (MTPY…TLLF), 30-50 (GFFL…FLKV), 61-81 (GGKM…IPLY), 92-112 (WQIL…VYIV), 126-146 (MLPQ…IGGI), 149-169 (ITSF…ALFL), 177-197 (PIAK…AVGI), and 209-229 (IAVT…MPFI).

Belongs to the CidB/LrgB family. LrgB subfamily.

It is found in the cell membrane. Inhibits the expression or activity of extracellular murein hydrolases by interacting, possibly with LrgA, with the holin-like protein CidA. The LrgAB and CidA proteins may affect the proton motive force of the membrane. May be involved in programmed cell death (PCD), possibly triggering PCD in response to antibiotics and environmental stresses. The chain is Antiholin-like protein LrgB from Bacillus mycoides (strain KBAB4) (Bacillus weihenstephanensis).